A 177-amino-acid polypeptide reads, in one-letter code: MSRVAKAPVVIPAGVEVKLNGQVISIKGKNGELTRTIHEAVDVQHADNQLSFAPREGHANGWALAGTTRALLNGMVIGVTDGFTKKLQLVGVGYRAAVKGNVVNLSLGFSHPIDHQLPAGITAECPSQTEIVLKGADKQIIGQVAADLRAYRRPEPYKGKGVRYADEVVRTKEAKKK.

Belongs to the universal ribosomal protein uL6 family. As to quaternary structure, part of the 50S ribosomal subunit.

This protein binds to the 23S rRNA, and is important in its secondary structure. It is located near the subunit interface in the base of the L7/L12 stalk, and near the tRNA binding site of the peptidyltransferase center. The polypeptide is Large ribosomal subunit protein uL6 (Sodalis glossinidius (strain morsitans)).